A 395-amino-acid polypeptide reads, in one-letter code: S-adenosylmethionine synthase (395 aa).

H16 contributes to the ATP binding site. D18 is a binding site for Mg(2+). Position 44 (E44) interacts with K(+). Residues E57 and Q100 each contribute to the L-methionine site. The flexible loop stretch occupies residues Q100 to R110. Residues D167–K169, R233–F234, D242, R248–K249, A265, and K269 each bind ATP. An L-methionine-binding site is contributed by D242. K273 provides a ligand contact to L-methionine.

The protein belongs to the AdoMet synthase family. In terms of assembly, homotetramer; dimer of dimers. It depends on Mg(2+) as a cofactor. The cofactor is K(+).

It localises to the cytoplasm. It carries out the reaction L-methionine + ATP + H2O = S-adenosyl-L-methionine + phosphate + diphosphate. It functions in the pathway amino-acid biosynthesis; S-adenosyl-L-methionine biosynthesis; S-adenosyl-L-methionine from L-methionine: step 1/1. Functionally, catalyzes the formation of S-adenosylmethionine (AdoMet) from methionine and ATP. The overall synthetic reaction is composed of two sequential steps, AdoMet formation and the subsequent tripolyphosphate hydrolysis which occurs prior to release of AdoMet from the enzyme. The polypeptide is S-adenosylmethionine synthase (Burkholderia vietnamiensis (strain G4 / LMG 22486) (Burkholderia cepacia (strain R1808))).